The chain runs to 319 residues: 4-hydroxy-3-methylbut-2-enyl diphosphate reductase (319 aa).

Cys12 contributes to the [4Fe-4S] cluster binding site. (2E)-4-hydroxy-3-methylbut-2-enyl diphosphate is bound by residues His41 and His74. Residues His41 and His74 each coordinate dimethylallyl diphosphate. Positions 41 and 74 each coordinate isopentenyl diphosphate. Residue Cys96 participates in [4Fe-4S] cluster binding. His124 provides a ligand contact to (2E)-4-hydroxy-3-methylbut-2-enyl diphosphate. His124 serves as a coordination point for dimethylallyl diphosphate. His124 is an isopentenyl diphosphate binding site. Glu126 serves as the catalytic Proton donor. Thr167 contacts (2E)-4-hydroxy-3-methylbut-2-enyl diphosphate. A [4Fe-4S] cluster-binding site is contributed by Cys197. Residues Ser225, Ser226, Asn227, and Ser269 each contribute to the (2E)-4-hydroxy-3-methylbut-2-enyl diphosphate site. Residues Ser225, Ser226, Asn227, and Ser269 each contribute to the dimethylallyl diphosphate site. 4 residues coordinate isopentenyl diphosphate: Ser225, Ser226, Asn227, and Ser269.

It belongs to the IspH family. Homodimer. It depends on [4Fe-4S] cluster as a cofactor.

It carries out the reaction isopentenyl diphosphate + 2 oxidized [2Fe-2S]-[ferredoxin] + H2O = (2E)-4-hydroxy-3-methylbut-2-enyl diphosphate + 2 reduced [2Fe-2S]-[ferredoxin] + 2 H(+). It catalyses the reaction dimethylallyl diphosphate + 2 oxidized [2Fe-2S]-[ferredoxin] + H2O = (2E)-4-hydroxy-3-methylbut-2-enyl diphosphate + 2 reduced [2Fe-2S]-[ferredoxin] + 2 H(+). Its pathway is isoprenoid biosynthesis; dimethylallyl diphosphate biosynthesis; dimethylallyl diphosphate from (2E)-4-hydroxy-3-methylbutenyl diphosphate: step 1/1. The protein operates within isoprenoid biosynthesis; isopentenyl diphosphate biosynthesis via DXP pathway; isopentenyl diphosphate from 1-deoxy-D-xylulose 5-phosphate: step 6/6. Catalyzes the conversion of 1-hydroxy-2-methyl-2-(E)-butenyl 4-diphosphate (HMBPP) into a mixture of isopentenyl diphosphate (IPP) and dimethylallyl diphosphate (DMAPP). Acts in the terminal step of the DOXP/MEP pathway for isoprenoid precursor biosynthesis. The polypeptide is 4-hydroxy-3-methylbut-2-enyl diphosphate reductase (Buchnera aphidicola subsp. Acyrthosiphon pisum (strain Tuc7)).